Reading from the N-terminus, the 745-residue chain is Protein PHOX1 (745 aa).

Residues 1–10 (MGKPTGKKKN) are compositionally biased toward basic residues. The interval 1 to 37 (MGKPTGKKKNNNYTEMPPTESSTTGGGKTGKSFDRSA) is disordered. TPR repeat units lie at residues 52–85 (ALEL…LPRD), 90–125 (AYLR…SPRF), and 126–159 (SKAL…EPEN). The region spanning 280–359 (TRTVKLVHGD…GSFRLYIAEV (80 aa)) is the PB1 domain. TPR repeat units lie at residues 406-441 (EHWI…YTEA), 443-472 (EDIV…AMFN), 494-528 (ETIL…KSDF), and 553-586 (GEVD…WEEM).

As to quaternary structure, interacts with myosin XI-1 and XI-K.

The protein localises to the cytoplasmic vesicle membrane. Its function is as follows. Carboxylate clamp type tetratricopeptide repeat protein that may act as a potential Hsp90/Hsp70 co-chaperone. Contributes to polar growth of root hairs. In Arabidopsis thaliana (Mouse-ear cress), this protein is Protein PHOX1.